A 79-amino-acid polypeptide reads, in one-letter code: Small ribosomal subunit protein bS18 (79 aa).

The protein belongs to the bacterial ribosomal protein bS18 family. As to quaternary structure, part of the 30S ribosomal subunit. Forms a tight heterodimer with protein bS6.

Functionally, binds as a heterodimer with protein bS6 to the central domain of the 16S rRNA, where it helps stabilize the platform of the 30S subunit. This Streptococcus pyogenes serotype M5 (strain Manfredo) protein is Small ribosomal subunit protein bS18.